Here is a 640-residue protein sequence, read N- to C-terminus: Threonine--tRNA ligase (640 aa).

In terms of domain architecture, TGS spans 1–61; that stretch reads MPTITLPDGS…DSDATLQIIT (61 aa). The interval 242 to 533 is catalytic; it reads DHRKIGKRLG…LIEHYEGAFP (292 aa). Zn(2+)-binding residues include Cys333, His384, and His510.

Belongs to the class-II aminoacyl-tRNA synthetase family. As to quaternary structure, homodimer. Requires Zn(2+) as cofactor.

It is found in the cytoplasm. The enzyme catalyses tRNA(Thr) + L-threonine + ATP = L-threonyl-tRNA(Thr) + AMP + diphosphate + H(+). Functionally, catalyzes the attachment of threonine to tRNA(Thr) in a two-step reaction: L-threonine is first activated by ATP to form Thr-AMP and then transferred to the acceptor end of tRNA(Thr). Also edits incorrectly charged L-seryl-tRNA(Thr). This Pseudomonas fluorescens (strain Pf0-1) protein is Threonine--tRNA ligase.